The sequence spans 98 residues: NADH-ubiquinone oxidoreductase chain 4L (98 aa).

The next 3 helical transmembrane spans lie at 2 to 22 (PSIS…MLIF), 29 to 49 (SLLC…LTIL), and 61 to 81 (ILLL…LVTV).

The protein belongs to the complex I subunit 4L family. In terms of assembly, core subunit of respiratory chain NADH dehydrogenase (Complex I) which is composed of 45 different subunits.

Its subcellular location is the mitochondrion inner membrane. The catalysed reaction is a ubiquinone + NADH + 5 H(+)(in) = a ubiquinol + NAD(+) + 4 H(+)(out). Its function is as follows. Core subunit of the mitochondrial membrane respiratory chain NADH dehydrogenase (Complex I) which catalyzes electron transfer from NADH through the respiratory chain, using ubiquinone as an electron acceptor. Part of the enzyme membrane arm which is embedded in the lipid bilayer and involved in proton translocation. This is NADH-ubiquinone oxidoreductase chain 4L (MT-ND4L) from Eulemur mongoz (Mongoose lemur).